The chain runs to 645 residues: Zinc finger protein 64 (645 aa).

C2H2-type zinc fingers lie at residues His175–His197, Tyr203–His225, and Phe231–His253. A Glycyl lysine isopeptide (Lys-Gly) (interchain with G-Cter in SUMO2) cross-link involves residue Glu286. The C2H2-type 4; atypical zinc finger occupies Phe299–His324. 9 consecutive C2H2-type zinc fingers follow at residues His330 to His352, His358 to His380, Tyr386 to His408, Phe414 to His436, Phe442 to His465, Phe467 to His489, Glu495 to His517, Phe523 to His546, and Phe580 to His602. A Glycyl lysine isopeptide (Lys-Gly) (interchain with G-Cter in SUMO2) cross-link involves residue Asn397. 2 stretches are compositionally biased toward basic and acidic residues: residues Asp543–Asn554 and Lys600–Asn610. 2 disordered regions span residues Asp543 to Ser567 and Lys600 to Leu645. Residue Val545 is modified to Phosphoserine. Polar residues predominate over residues Ala622–Ser631.

This sequence belongs to the krueppel C2H2-type zinc-finger protein family. Interacts with ZNF70; this interaction promote the transactivation of the HES1 gene. Interacts with NOTCH1.

It localises to the nucleus. Functionally, may be involved in the regulation of mesenchymal cell differentiation through transactivation of NOTCH1 target genes. This Homo sapiens (Human) protein is Zinc finger protein 64.